The chain runs to 420 residues: UDP-glucuronic acid decarboxylase 1 (420 aa).

The residue at position 1 (M1) is an N-acetylmethionine. At 1 to 19 the chain is on the cytoplasmic side; the sequence is MVSKALLRLVSAVNRRRMK. The helical; Signal-anchor for type II membrane protein transmembrane segment at 20–40 threads the bilayer; that stretch reads LLLGIALLAYVASVWGNFVNM. Topologically, residues 41–420 are lumenal; it reads RSIQENGELK…RIKKGRTRHN (380 aa). At T94 the chain carries Phosphothreonine. 10 residues coordinate NAD(+): G98, F99, V100, D119, N120, F122, T123, G124, D144, and V145. UDP-alpha-D-glucuronate contacts are provided by L149 and Y150. 2 residues coordinate NAD(+): L159 and S161. K177 contributes to the UDP-alpha-D-glucuronate binding site. T178 is an NAD(+) binding site. The UDP-alpha-D-glucuronate site is built by N185, G188, K191, and R192. NAD(+)-binding residues include A200, Y231, and K235. Y231 acts as the Proton acceptor in catalysis. Residues Y245, Q248, and E249 each contribute to the UDP-alpha-D-glucuronate site. NAD(+) is bound by residues T261, H267, and R272. N-linked (GlcNAc...) asparagine glycosylation occurs at N316.

It belongs to the NAD(P)-dependent epimerase/dehydratase family. UDP-glucuronic acid decarboxylase subfamily. Homodimer and homotetramer. Interacts with AKT1. NAD(+) serves as cofactor.

The protein localises to the golgi apparatus. It is found in the golgi stack membrane. The enzyme catalyses UDP-alpha-D-glucuronate + H(+) = UDP-alpha-D-xylose + CO2. It participates in nucleotide-sugar biosynthesis; UDP-alpha-D-xylose biosynthesis; UDP-alpha-D-xylose from UDP-alpha-D-glucuronate: step 1/1. Functionally, catalyzes the NAD-dependent decarboxylation of UDP-glucuronic acid to UDP-xylose. Necessary for the biosynthesis of the core tetrasaccharide in glycosaminoglycan biosynthesis. The chain is UDP-glucuronic acid decarboxylase 1 (UXS1) from Pongo abelii (Sumatran orangutan).